The primary structure comprises 120 residues: Protein EPIDERMAL PATTERNING FACTOR 2 (120 aa).

A signal peptide spans 1 to 25; it reads MTKFVRKYMFCLVLVFAACSLVVNS. 4 cysteine pairs are disulfide-bonded: cysteine 76–cysteine 107, cysteine 80–cysteine 86, cysteine 83–cysteine 109, and cysteine 95–cysteine 101.

This sequence belongs to the plant cysteine rich small secretory peptide family. Epidermal patterning factor subfamily. As to quaternary structure, interacts with ERECTA, ERL1 and TMM. In terms of tissue distribution, expressed in leaves, especially by the MMCs and their early descendants cells (stomatal lineage cells) including guard mother cells (GMCs).

The protein localises to the secreted. Its function is as follows. Controls stomatal patterning. Regulates the number of cells that enter, and remain in, the stomatal lineage by inhibiting protodermal cells from adopting the meristemoid mother cell (MMC) fate in a non-cell-autonomous manner. Mediates stomatal development inhibition. MEPF2: mobile signal controlling stomatal development in a non-cell-autonomous manner. Uses ERECTA as major receptor. Inactivated by cleavage by CRSP (AC Q9LNU1). May act by competing with somatogen (AC Q9SV72) for the same receptor, TMM (AC Q9SSD1). This is Protein EPIDERMAL PATTERNING FACTOR 2 from Arabidopsis thaliana (Mouse-ear cress).